Reading from the N-terminus, the 424-residue chain is Glutamyl-tRNA reductase (424 aa).

Residues 49–52, S105, 110–112, and Q116 contribute to the substrate site; these read TCNR and EPQ. C50 serves as the catalytic Nucleophile. Position 185–190 (185–190) interacts with NADP(+); the sequence is GSGETA.

It belongs to the glutamyl-tRNA reductase family. As to quaternary structure, homodimer.

It catalyses the reaction (S)-4-amino-5-oxopentanoate + tRNA(Glu) + NADP(+) = L-glutamyl-tRNA(Glu) + NADPH + H(+). It functions in the pathway porphyrin-containing compound metabolism; protoporphyrin-IX biosynthesis; 5-aminolevulinate from L-glutamyl-tRNA(Glu): step 1/2. Catalyzes the NADPH-dependent reduction of glutamyl-tRNA(Glu) to glutamate 1-semialdehyde (GSA). This Legionella pneumophila (strain Paris) protein is Glutamyl-tRNA reductase.